The sequence spans 49 residues: Small, acid-soluble spore protein O (49 aa).

A disordered region spans residues 23-49 (AGYNEKFSNEPLTEAQRQNNKKRKKNQ).

This sequence belongs to the SspO family.

The protein localises to the spore core. This chain is Small, acid-soluble spore protein O, found in Geobacillus thermodenitrificans (strain NG80-2).